A 491-amino-acid polypeptide reads, in one-letter code: Glutamyl-tRNA(Gln) amidotransferase subunit A (491 aa).

Residues Lys81 and Ser156 each act as charge relay system in the active site. Ser180 functions as the Acyl-ester intermediate in the catalytic mechanism.

This sequence belongs to the amidase family. GatA subfamily. Heterotrimer of A, B and C subunits.

The catalysed reaction is L-glutamyl-tRNA(Gln) + L-glutamine + ATP + H2O = L-glutaminyl-tRNA(Gln) + L-glutamate + ADP + phosphate + H(+). Functionally, allows the formation of correctly charged Gln-tRNA(Gln) through the transamidation of misacylated Glu-tRNA(Gln) in organisms which lack glutaminyl-tRNA synthetase. The reaction takes place in the presence of glutamine and ATP through an activated gamma-phospho-Glu-tRNA(Gln). The sequence is that of Glutamyl-tRNA(Gln) amidotransferase subunit A from Alcanivorax borkumensis (strain ATCC 700651 / DSM 11573 / NCIMB 13689 / SK2).